A 582-amino-acid chain; its full sequence is Frizzled-10 (582 aa).

The N-terminal stretch at 1 to 21 (MQHPGPRLWLVLQVMIGSCTA) is a signal peptide. Topologically, residues 22–226 (ISSMDLERPG…DVYWSRDDKR (205 aa)) are extracellular. The FZ domain maps to 30-151 (PGDGKCQPVE…NDPNYLCMEA (122 aa)). 5 disulfide bridges follow: C35-C96, C43-C89, C80-C118, C107-C148, and C111-C135. N49 is a glycosylation site (N-linked (GlcNAc...) asparagine). The segment at 153–189 (NNGSDEPSRGSGMFPPLFRPQRPHSAQEHPLKDGGPG) is disordered. N-linked (GlcNAc...) asparagine glycosylation occurs at N154. Residues 227–247 (FAVVWLAIWSVLCFFSSAFTV) form a helical membrane-spanning segment. Over 248–263 (LTFLIDPSRFRYPERP) the chain is Cytoplasmic. The helical transmembrane segment at 264-284 (IIFLSMCYCVYSVGYIIRLFA) threads the bilayer. At 285-312 (GAESIACDRDSGQLYVIQEGLESTGCTL) the chain is on the extracellular side. The chain crosses the membrane as a helical span at residues 313-333 (VFLVLYYFGMASSLWWVVLTL). The Cytoplasmic portion of the chain corresponds to 334 to 352 (TWFLAAGKKWGHEAIEANS). Residues 353–373 (SYFHLAAWAIPAVKTILILVM) form a helical membrane-spanning segment. Residues 374 to 394 (RRVAGDELTGVCYVGSMDVNA) lie on the Extracellular side of the membrane. A helical membrane pass occupies residues 395–415 (LTGFVLVPLACYLVIGTSFIL). The Cytoplasmic portion of the chain corresponds to 416-444 (SGFVALFHIRRVMKTGGENTDKLEKLMVR). The chain crosses the membrane as a helical span at residues 445–465 (IGVFSLLYTVPATCVIACYFY). Residues 466–503 (ERLNMDYWKMLATQHKCKMNNQTKTPDCLMTTSIPAVE) are Extracellular-facing. N486 carries N-linked (GlcNAc...) asparagine glycosylation. The helical transmembrane segment at 504–524 (VFMVKVSMLLVVGITSGVWVW) threads the bilayer. Residues 525–582 (TSKTLQSWQHVCSRGLKRKSRRKPASVVTSAGIYKKAQHPQKPHLGKYELPAQPSACV) are Cytoplasmic-facing. The Lys-Thr-X-X-X-Trp motif, mediates interaction with the PDZ domain of Dvl family members motif lies at 527-532 (KTLQSW). The tract at residues 561 to 582 (AQHPQKPHLGKYELPAQPSACV) is disordered. Positions 580 to 582 (ACV) match the PDZ-binding motif.

It belongs to the G-protein coupled receptor Fz/Smo family. Interacts with MYOC. Interacts with WNT7B. In terms of processing, ubiquitinated by ZNRF3, leading to its degradation by the proteasome.

It localises to the cell membrane. In terms of biological role, receptor for Wnt proteins. Functions in the canonical Wnt/beta-catenin signaling pathway. The canonical Wnt/beta-catenin signaling pathway leads to the activation of disheveled proteins, inhibition of GSK-3 kinase, nuclear accumulation of beta-catenin and activation of Wnt target genes. A second signaling pathway involving PKC and calcium fluxes has been seen for some family members, but it is not yet clear if it represents a distinct pathway or if it can be integrated in the canonical pathway, as PKC seems to be required for Wnt-mediated inactivation of GSK-3 kinase. Both pathways seem to involve interactions with G-proteins. May be involved in transduction and intercellular transmission of polarity information during tissue morphogenesis and/or in differentiated tissues. This is Frizzled-10 (Fzd10) from Mus musculus (Mouse).